The sequence spans 497 residues: Probable cytosol aminopeptidase (497 aa).

Residues Lys267 and Asp272 each contribute to the Mn(2+) site. The active site involves Lys279. Mn(2+)-binding residues include Asp290, Asp349, and Glu351. The active site involves Arg353.

The protein belongs to the peptidase M17 family. Mn(2+) is required as a cofactor.

The protein localises to the cytoplasm. The catalysed reaction is Release of an N-terminal amino acid, Xaa-|-Yaa-, in which Xaa is preferably Leu, but may be other amino acids including Pro although not Arg or Lys, and Yaa may be Pro. Amino acid amides and methyl esters are also readily hydrolyzed, but rates on arylamides are exceedingly low.. The enzyme catalyses Release of an N-terminal amino acid, preferentially leucine, but not glutamic or aspartic acids.. In terms of biological role, presumably involved in the processing and regular turnover of intracellular proteins. Catalyzes the removal of unsubstituted N-terminal amino acids from various peptides. The sequence is that of Probable cytosol aminopeptidase from Pseudomonas putida (strain W619).